The sequence spans 197 residues: Holliday junction branch migration complex subunit RuvA (197 aa).

Positions 1–63 are domain I; it reads MIALLNGQLI…EDALLLFGFL (63 aa). A domain II region spans residues 64–142; the sequence is TETEKDLFGL…PVQAVPGNAP (79 aa). Residues 142–146 form a flexible linker region; the sequence is PLPAE. A domain III region spans residues 147-197; sequence TAGDLREDALSALVNLGYKENLSRKALDGIDTAPDAPLEDILKQALKLLMR.

It belongs to the RuvA family. As to quaternary structure, homotetramer. Forms an RuvA(8)-RuvB(12)-Holliday junction (HJ) complex. HJ DNA is sandwiched between 2 RuvA tetramers; dsDNA enters through RuvA and exits via RuvB. An RuvB hexamer assembles on each DNA strand where it exits the tetramer. Each RuvB hexamer is contacted by two RuvA subunits (via domain III) on 2 adjacent RuvB subunits; this complex drives branch migration. In the full resolvosome a probable DNA-RuvA(4)-RuvB(12)-RuvC(2) complex forms which resolves the HJ.

It localises to the cytoplasm. In terms of biological role, the RuvA-RuvB-RuvC complex processes Holliday junction (HJ) DNA during genetic recombination and DNA repair, while the RuvA-RuvB complex plays an important role in the rescue of blocked DNA replication forks via replication fork reversal (RFR). RuvA specifically binds to HJ cruciform DNA, conferring on it an open structure. The RuvB hexamer acts as an ATP-dependent pump, pulling dsDNA into and through the RuvAB complex. HJ branch migration allows RuvC to scan DNA until it finds its consensus sequence, where it cleaves and resolves the cruciform DNA. This chain is Holliday junction branch migration complex subunit RuvA, found in Syntrophotalea carbinolica (strain DSM 2380 / NBRC 103641 / GraBd1) (Pelobacter carbinolicus).